The chain runs to 334 residues: Glycerol-1-phosphate dehydrogenase [NAD(P)+] (334 aa).

NAD(+) is bound by residues 77 to 81 (GKPID) and 99 to 102 (TTAS). Aspartate 104 lines the substrate pocket. An NAD(+)-binding site is contributed by serine 108. Aspartate 147 lines the substrate pocket. 2 residues coordinate Zn(2+): aspartate 147 and histidine 225. Substrate is bound at residue histidine 229. Residue histidine 246 coordinates Zn(2+).

It belongs to the glycerol-1-phosphate dehydrogenase family. Zn(2+) serves as cofactor.

The protein localises to the cytoplasm. The enzyme catalyses sn-glycerol 1-phosphate + NAD(+) = dihydroxyacetone phosphate + NADH + H(+). It catalyses the reaction sn-glycerol 1-phosphate + NADP(+) = dihydroxyacetone phosphate + NADPH + H(+). The protein operates within membrane lipid metabolism; glycerophospholipid metabolism. Catalyzes the NAD(P)H-dependent reduction of dihydroxyacetonephosphate (DHAP or glycerone phosphate) to glycerol 1-phosphate (G1P). The G1P thus generated is used as the glycerophosphate backbone of phospholipids in the cellular membranes of Archaea. The protein is Glycerol-1-phosphate dehydrogenase [NAD(P)+] of Methanococcus vannielii (strain ATCC 35089 / DSM 1224 / JCM 13029 / OCM 148 / SB).